The chain runs to 211 residues: Glutathione S-transferase class-mu 28 kDa isozyme (211 aa).

Position 2 is an N-acetylalanine (A2). A GST N-terminal domain is found at 4-86 (EHIKVIYFDG…YMAKKHHMMG (83 aa)). Residues Y10, 10 to 11 (YF), R16, 41 to 45 (WPKIK), L53, 55 to 56 (AV), and 70 to 71 (ES) contribute to the glutathione site. Residues 88–211 (TDEEYYSVEK…YLSNRPATPF (124 aa)) enclose the GST C-terminal domain.

This sequence belongs to the GST superfamily. Mu family. In terms of assembly, homodimer. In the adult, expressed in excretory epithelial cells but absent from the caecal epithelium and flame cells. Also expressed in the tegument and its extensions into the parenchyma. In the schistosomulum, expressed in the tegument and associated structures. Not expressed in digestive tract, reproductive organs or muscles (at protein level).

It catalyses the reaction RX + glutathione = an S-substituted glutathione + a halide anion + H(+). In terms of biological role, conjugation of reduced glutathione to a wide number of exogenous and endogenous hydrophobic electrophiles. Its function is as follows. GST isoenzymes appear to play a central role in the parasite detoxification system. Other functions are also suspected including a role in increasing the solubility of haematin in the parasite gut. This chain is Glutathione S-transferase class-mu 28 kDa isozyme (GST28), found in Schistosoma mansoni (Blood fluke).